A 571-amino-acid polypeptide reads, in one-letter code: Dehydrocurvularin exporter (571 aa).

Positions 1 to 34 are disordered; sequence MADGSDLENNHKPELDRSQPGSTSNGSQEQKDPD. Positions 8-17 are enriched in basic and acidic residues; the sequence is ENNHKPELDR. The span at 19–28 shows a compositional bias: polar residues; the sequence is QPGSTSNGSQ. An N-linked (GlcNAc...) asparagine glycan is attached at Asn-25. A run of 14 helical transmembrane segments spans residues 47 to 67, 86 to 106, 120 to 140, 143 to 163, 171 to 191, 202 to 222, 238 to 258, 275 to 295, 317 to 337, 350 to 370, 379 to 399, 405 to 425, 443 to 463, and 514 to 534; these read ILVMFTIFVSTILVSLEIGII, WYGSATFILAAAASPLWGKLF, FIFLVGSIVAAAAPNSVSVII, AIQGWGASGVLGGTLIVINYV, LLIGTWMAVFMVSTILGPVIG, WCFWINLPVGGPIIVLLLLFL, IILALDLPGFCLLLVSLVCLT, VIATLVMWIVLSIAFLVTEWF, LFCLISYAALYQVMFYLPIYF, VNTLPFLAFFALGAVVSGGVI, FELLGALIMTAGMALIYILDV, MYIGAEVLFGFGVGICNQIPM, IMVMCQTLSGAYFVAIAQSLF, and VFAFSLACAAFAVLLSLIIPF. The tract at residues 538–571 is disordered; that stretch reads PDHGKKDKPATEEAAEEKSEAEGKVSGDKEENHS.

Belongs to the major facilitator superfamily. TCR/Tet family.

The protein resides in the cell membrane. Functionally, efflux pump that is probably involved in the export of dehydrocurvularin. This is Dehydrocurvularin exporter from Aspergillus terreus.